We begin with the raw amino-acid sequence, 312 residues long: uncharacterized protein (312 aa).

The signal sequence occupies residues 1-28 (MNSADTQEPKSFNHTDMWTAFGTTMSGA).

Its function is as follows. The FAS-operon encodes genes involved in cytokinin production and in host plant fasciation (leafy gall). This is an uncharacterized protein from Rhodococcoides fascians (Rhodococcus fascians).